The following is a 127-amino-acid chain: Aspartate 1-decarboxylase (127 aa).

Residue Ser25 is the Schiff-base intermediate with substrate; via pyruvic acid of the active site. Position 25 is a pyruvic acid (Ser) (Ser25). Residue Thr57 participates in substrate binding. The Proton donor role is filled by Tyr58. Substrate is bound at residue 73-75; the sequence is GAA.

This sequence belongs to the PanD family. In terms of assembly, heterooctamer of four alpha and four beta subunits. Requires pyruvate as cofactor. In terms of processing, is synthesized initially as an inactive proenzyme, which is activated by self-cleavage at a specific serine bond to produce a beta-subunit with a hydroxyl group at its C-terminus and an alpha-subunit with a pyruvoyl group at its N-terminus.

The protein localises to the cytoplasm. The catalysed reaction is L-aspartate + H(+) = beta-alanine + CO2. It functions in the pathway cofactor biosynthesis; (R)-pantothenate biosynthesis; beta-alanine from L-aspartate: step 1/1. Catalyzes the pyruvoyl-dependent decarboxylation of aspartate to produce beta-alanine. In Anoxybacillus flavithermus (strain DSM 21510 / WK1), this protein is Aspartate 1-decarboxylase.